The sequence spans 347 residues: Ubiquinone biosynthesis protein coq-4, mitochondrial (347 aa).

A mitochondrion-targeting transit peptide spans 1–49 (MEVTALRRSAALVARASSQNAIRPAVCAAISSTSPTPPTQIQTQQTRQF). Zn(2+) contacts are provided by His185, Asp186, His189, and Glu201. The segment at 284–310 (IRKREREEKRRRKEMERMLSGRGTEDV) is disordered.

The protein belongs to the COQ4 family. In terms of assembly, component of a multi-subunit COQ enzyme complex, composed of at least coq-3, coq-4, coq-5, coq-6, coq-7 and coq-9. Zn(2+) serves as cofactor.

The protein localises to the mitochondrion inner membrane. The enzyme catalyses a 4-hydroxy-3-methoxy-5-(all-trans-polyprenyl)benzoate + H(+) = a 2-methoxy-6-(all-trans-polyprenyl)phenol + CO2. The protein operates within cofactor biosynthesis; ubiquinone biosynthesis. Functionally, lyase that catalyzes the C1-decarboxylation of 4-hydroxy-3-methoxy-5-(all-trans-polyprenyl)benzoic acid into 2-methoxy-6-(all-trans-polyprenyl)phenol during ubiquinone biosynthesis. This is Ubiquinone biosynthesis protein coq-4, mitochondrial from Neurospora crassa (strain ATCC 24698 / 74-OR23-1A / CBS 708.71 / DSM 1257 / FGSC 987).